The following is a 473-amino-acid chain: Phosphoglucosamine mutase (473 aa).

The active-site Phosphoserine intermediate is Ser102. Positions 102, 248, 250, and 252 each coordinate Mg(2+). Position 102 is a phosphoserine (Ser102).

Belongs to the phosphohexose mutase family. Requires Mg(2+) as cofactor. Activated by phosphorylation.

It catalyses the reaction alpha-D-glucosamine 1-phosphate = D-glucosamine 6-phosphate. Catalyzes the conversion of glucosamine-6-phosphate to glucosamine-1-phosphate. The sequence is that of Phosphoglucosamine mutase from Rhodospirillum centenum (strain ATCC 51521 / SW).